The primary structure comprises 443 residues: Cobyrinate a,c-diamide synthase (443 aa).

The GATase cobBQ-type domain maps to Lys-248–Tyr-433. Residue Cys-327 is the Nucleophile of the active site.

Belongs to the CobB/CbiA family. It depends on Mg(2+) as a cofactor.

It carries out the reaction cob(II)yrinate + 2 L-glutamine + 2 ATP + 2 H2O = cob(II)yrinate a,c diamide + 2 L-glutamate + 2 ADP + 2 phosphate + 2 H(+). The enzyme catalyses Ni-sirohydrochlorin + 2 L-glutamine + 2 ATP + 2 H2O = Ni-sirohydrochlorin a,c-diamide + 2 L-glutamate + 2 ADP + 2 phosphate + 2 H(+). It functions in the pathway cofactor biosynthesis; adenosylcobalamin biosynthesis; cob(II)yrinate a,c-diamide from sirohydrochlorin (anaerobic route): step 10/10. Functionally, catalyzes the ATP-dependent amidation of the two carboxylate groups at positions a and c of cobyrinate, using either L-glutamine or ammonia as the nitrogen source. Involved in the biosynthesis of the unique nickel-containing tetrapyrrole coenzyme F430, the prosthetic group of methyl-coenzyme M reductase (MCR), which plays a key role in methanogenesis and anaerobic methane oxidation. Catalyzes the ATP-dependent amidation of the two carboxylate groups at positions a and c of Ni-sirohydrochlorin, using L-glutamine or ammonia as the nitrogen source. The protein is Cobyrinate a,c-diamide synthase of Methanocaldococcus jannaschii (strain ATCC 43067 / DSM 2661 / JAL-1 / JCM 10045 / NBRC 100440) (Methanococcus jannaschii).